The sequence spans 223 residues: uncharacterized protein (223 aa).

The interval 40–70 is disordered; it reads GSKRLKPAKFGTEGKERVEQRTERQRTGSSK. Positions 51 to 70 are enriched in basic and acidic residues; sequence TEGKERVEQRTERQRTGSSK.

This is an uncharacterized protein from Homo sapiens (Human).